We begin with the raw amino-acid sequence, 204 residues long: uncharacterized protein (204 aa).

This is an uncharacterized protein from Caenorhabditis elegans.